Here is a 39-residue protein sequence, read N- to C-terminus: Photosystem II reaction center protein Y (39 aa).

A helical membrane pass occupies residues 7-25 (LLIVLLPILAAAGWAVFNI).

Belongs to the PsbY family. PSII is composed of 1 copy each of membrane proteins PsbA, PsbB, PsbC, PsbD, PsbE, PsbF, PsbH, PsbI, PsbJ, PsbK, PsbL, PsbM, PsbT, PsbX, PsbY, PsbZ, Psb30/Ycf12, peripheral proteins PsbO, CyanoQ (PsbQ), PsbU, PsbV and a large number of cofactors. It forms dimeric complexes.

It is found in the cellular thylakoid membrane. Loosely associated component of the core of photosystem II (PSII), it is not always seen in crystals. PSII is a light-driven water plastoquinone oxidoreductase, using light energy to abstract electrons from H(2)O, generating a proton gradient subsequently used for ATP formation. The chain is Photosystem II reaction center protein Y from Trichodesmium erythraeum (strain IMS101).